The following is a 183-amino-acid chain: Probable adenylyl-sulfate kinase (183 aa).

17–24 (GLPGSGKT) is a binding site for ATP. The active-site Phosphoserine intermediate is the serine 91.

This sequence belongs to the APS kinase family.

The enzyme catalyses adenosine 5'-phosphosulfate + ATP = 3'-phosphoadenylyl sulfate + ADP + H(+). Its pathway is sulfur metabolism; hydrogen sulfide biosynthesis; sulfite from sulfate: step 2/3. In terms of biological role, catalyzes the synthesis of activated sulfate. The protein is Probable adenylyl-sulfate kinase (cysC) of Aeropyrum pernix (strain ATCC 700893 / DSM 11879 / JCM 9820 / NBRC 100138 / K1).